Reading from the N-terminus, the 467-residue chain is 3-isopropylmalate dehydratase large subunit (467 aa).

[4Fe-4S] cluster contacts are provided by Cys-348, Cys-409, and Cys-412.

It belongs to the aconitase/IPM isomerase family. LeuC type 1 subfamily. In terms of assembly, heterodimer of LeuC and LeuD. It depends on [4Fe-4S] cluster as a cofactor.

It catalyses the reaction (2R,3S)-3-isopropylmalate = (2S)-2-isopropylmalate. It functions in the pathway amino-acid biosynthesis; L-leucine biosynthesis; L-leucine from 3-methyl-2-oxobutanoate: step 2/4. Its function is as follows. Catalyzes the isomerization between 2-isopropylmalate and 3-isopropylmalate, via the formation of 2-isopropylmaleate. The protein is 3-isopropylmalate dehydratase large subunit of Thiobacillus denitrificans (strain ATCC 25259 / T1).